Consider the following 233-residue polypeptide: uncharacterized protein (233 aa).

Over residues 1 to 10 (MSSKLSKKKL) the composition is skewed to basic residues. Residues 1–90 (MSSKLSKKKL…KRQKGKNNDR (90 aa)) are disordered. Over residues 11-56 (KSLEYRSKKFDKKSQSLEEHEKKVQQKNEELEKKAADKISRDELPE) the composition is skewed to basic and acidic residues. Over residues 76 to 85 (KTLKSKRQKG) the composition is skewed to basic residues. In terms of domain architecture, RRM spans 92–171 (VILFVGNLPK…RKINIELTAG (80 aa)). 2 stretches are compositionally biased toward basic and acidic residues: residues 194-216 (MRQRVASEEQQAGEEKMARKAVA) and 224-233 (IHPDRLRLLQ). Positions 194–233 (MRQRVASEEQQAGEEKMARKAVADEGLESGIHPDRLRLLQ) are disordered.

It localises to the nucleus. The protein resides in the nucleolus. This is an uncharacterized protein from Schizosaccharomyces pombe (strain 972 / ATCC 24843) (Fission yeast).